We begin with the raw amino-acid sequence, 290 residues long: 33 kDa chaperonin (290 aa).

2 disulfides stabilise this stretch: C235-C237 and C268-C271.

This sequence belongs to the HSP33 family. In terms of processing, under oxidizing conditions two disulfide bonds are formed involving the reactive cysteines. Under reducing conditions zinc is bound to the reactive cysteines and the protein is inactive.

It localises to the cytoplasm. Its function is as follows. Redox regulated molecular chaperone. Protects both thermally unfolding and oxidatively damaged proteins from irreversible aggregation. Plays an important role in the bacterial defense system toward oxidative stress. The sequence is that of 33 kDa chaperonin from Streptococcus equi subsp. equi (strain 4047).